The chain runs to 97 residues: Large ribosomal subunit protein uL23 (97 aa).

This sequence belongs to the universal ribosomal protein uL23 family. As to quaternary structure, part of the 50S ribosomal subunit. Contacts protein L29, and trigger factor when it is bound to the ribosome.

In terms of biological role, one of the early assembly proteins it binds 23S rRNA. One of the proteins that surrounds the polypeptide exit tunnel on the outside of the ribosome. Forms the main docking site for trigger factor binding to the ribosome. This Thermoanaerobacter pseudethanolicus (strain ATCC 33223 / 39E) (Clostridium thermohydrosulfuricum) protein is Large ribosomal subunit protein uL23.